Reading from the N-terminus, the 375-residue chain is Probable G-protein coupled receptor 34 (375 aa).

Residues 1 to 54 (MTTTSVDSWLCSSHGMHFITNYSDQASQNFSGVPNVTSCPMDEKLLSTVLTTFY) are Extracellular-facing. N-linked (GlcNAc...) asparagine glycans are attached at residues N21, N29, and N35. The helical transmembrane segment at 55–75 (SVIFLVGLVGNIIALYVFLGI) threads the bilayer. The Cytoplasmic segment spans residues 76 to 81 (HRKRNS). A helical membrane pass occupies residues 82–102 (IQIYLLNVAVADLLLIFCLPF). Residues 103–121 (RIMYHINQNKWTLGVILCK) are Extracellular-facing. An intrachain disulfide couples C120 to C197. A helical membrane pass occupies residues 122 to 142 (VVGTLFYMNMYISIILLGFIS). At 143 to 164 (LDRYIKINRSIQQRRAITTKQS) the chain is on the cytoplasmic side. Residues 165–185 (IYVCCIVWTVALAGFLTMIIL) traverse the membrane as a helical segment. The Extracellular portion of the chain corresponds to 186–209 (TLKKGGHNSTMCFHYRDRHNAKGE). The N-linked (GlcNAc...) asparagine glycan is linked to N193. The chain crosses the membrane as a helical span at residues 210-230 (AIFNFVLVVMFWLIFLLIILS). Over 231–262 (YIKIGKNLLRISKRRSKFPNSGKYATTARNSF) the chain is Cytoplasmic. Residues 263–283 (IVLIIFTICFVPYHAFRFIYI) traverse the membrane as a helical segment. Topologically, residues 284–303 (SSQLNVSSCYWKEIIHKTNE) are extracellular. N288 is a glycosylation site (N-linked (GlcNAc...) asparagine). The chain crosses the membrane as a helical span at residues 304–324 (IMLVFSSFNSCLDPVMYFLMS). At 325–375 (SNIRKIMCQLLFRRFQSEASRSESTSEFKPGHSLHDLSVTVKMPQYSTKGN) the chain is on the cytoplasmic side.

Belongs to the G-protein coupled receptor 1 family. In terms of tissue distribution, highly expressed in glial cells such as astrocytes and microglia.

The protein resides in the cell membrane. Functionally, G-protein-coupled receptor of lysophosphatidylserine (LysoPS) that plays different roles in immune response. Acts a damage-sensing receptor that triggers tissue repair upon recognition of dying neutrophils. Mechanistically, apoptotic neutrophils release lysophosphatydilserine that are recognized by type 3 innate lymphoid cells (ILC3s) via GPR34, which activates downstream PI3K-AKT and RAS-ERK signaling pathways leading to STAT3 activation and IL-22 production. Plays an important role in microglial function, controlling morphology and phagocytosis. The sequence is that of Probable G-protein coupled receptor 34 (Gpr34) from Mus musculus (Mouse).